The sequence spans 137 residues: Cellular retinoic acid-binding protein 1 (137 aa).

A Nuclear localization signal motif is present at residues 21-31; that stretch reads KALGVNAMLRK. 132–134 contacts all-trans-retinoate; the sequence is RIY.

This sequence belongs to the calycin superfamily. Fatty-acid binding protein (FABP) family.

Its subcellular location is the cytoplasm. Functionally, cytosolic CRABPs may regulate the access of retinoic acid to the nuclear retinoic acid receptors. This is Cellular retinoic acid-binding protein 1 (Crabp1) from Mus musculus (Mouse).